The following is a 351-amino-acid chain: Tetraacyldisaccharide 4'-kinase (351 aa).

47–54 (KAGGTGKT) is a binding site for ATP.

The protein belongs to the LpxK family.

It catalyses the reaction a lipid A disaccharide + ATP = a lipid IVA + ADP + H(+). Its pathway is glycolipid biosynthesis; lipid IV(A) biosynthesis; lipid IV(A) from (3R)-3-hydroxytetradecanoyl-[acyl-carrier-protein] and UDP-N-acetyl-alpha-D-glucosamine: step 6/6. Transfers the gamma-phosphate of ATP to the 4'-position of a tetraacyldisaccharide 1-phosphate intermediate (termed DS-1-P) to form tetraacyldisaccharide 1,4'-bis-phosphate (lipid IVA). This is Tetraacyldisaccharide 4'-kinase from Cytophaga hutchinsonii (strain ATCC 33406 / DSM 1761 / CIP 103989 / NBRC 15051 / NCIMB 9469 / D465).